Reading from the N-terminus, the 186-residue chain is Peptidyl-tRNA hydrolase (186 aa).

Residue Tyr14 participates in tRNA binding. Catalysis depends on His19, which acts as the Proton acceptor. Positions 64, 66, and 112 each coordinate tRNA.

This sequence belongs to the PTH family. Monomer.

The protein resides in the cytoplasm. It carries out the reaction an N-acyl-L-alpha-aminoacyl-tRNA + H2O = an N-acyl-L-amino acid + a tRNA + H(+). In terms of biological role, hydrolyzes ribosome-free peptidyl-tRNAs (with 1 or more amino acids incorporated), which drop off the ribosome during protein synthesis, or as a result of ribosome stalling. Catalyzes the release of premature peptidyl moieties from peptidyl-tRNA molecules trapped in stalled 50S ribosomal subunits, and thus maintains levels of free tRNAs and 50S ribosomes. In Bacillus cereus (strain ATCC 10987 / NRS 248), this protein is Peptidyl-tRNA hydrolase.